The following is a 160-amino-acid chain: tRNA (cytidine(34)-2'-O)-methyltransferase (160 aa).

4 residues coordinate S-adenosyl-L-methionine: leucine 78, glycine 100, isoleucine 122, and serine 130.

It belongs to the class IV-like SAM-binding methyltransferase superfamily. RNA methyltransferase TrmH family. TrmL subfamily. In terms of assembly, homodimer.

It localises to the cytoplasm. The catalysed reaction is cytidine(34) in tRNA + S-adenosyl-L-methionine = 2'-O-methylcytidine(34) in tRNA + S-adenosyl-L-homocysteine + H(+). The enzyme catalyses 5-carboxymethylaminomethyluridine(34) in tRNA(Leu) + S-adenosyl-L-methionine = 5-carboxymethylaminomethyl-2'-O-methyluridine(34) in tRNA(Leu) + S-adenosyl-L-homocysteine + H(+). Its function is as follows. Methylates the ribose at the nucleotide 34 wobble position in the two leucyl isoacceptors tRNA(Leu)(CmAA) and tRNA(Leu)(cmnm5UmAA). Catalyzes the methyl transfer from S-adenosyl-L-methionine to the 2'-OH of the wobble nucleotide. The sequence is that of tRNA (cytidine(34)-2'-O)-methyltransferase from Haemophilus influenzae (strain ATCC 51907 / DSM 11121 / KW20 / Rd).